A 165-amino-acid polypeptide reads, in one-letter code: Glycine cleavage system H protein, mitochondrial (165 aa).

The transit peptide at Met1 to Phe31 directs the protein to the mitochondrion. The 83-residue stretch at Val55–Lys137 folds into the Lipoyl-binding domain. An N6-lipoyllysine modification is found at Lys96.

This sequence belongs to the GcvH family. In terms of assembly, the glycine cleavage system is composed of four components that only loosely associate: the P protein (EC 1.4.4.2), the T protein (EC 2.1.2.10), the L protein (EC 1.8.1.4) and the lipoyl-bearing H protein. (R)-lipoate is required as a cofactor. Expressed in roots, stems and leaves.

Its subcellular location is the mitochondrion. Its function is as follows. The glycine cleavage system catalyzes the degradation of glycine. The H protein shuttles the methylamine group of glycine from the P protein to the T protein. The chain is Glycine cleavage system H protein, mitochondrial (GDCSH) from Flaveria trinervia (Clustered yellowtops).